A 357-amino-acid polypeptide reads, in one-letter code: 3'-hydroxy-N-methyl-(S)-coclaurine 4'-O-methyltransferase 2 (357 aa).

Residue aspartate 226 coordinates S-adenosyl-L-methionine. Catalysis depends on histidine 264, which acts as the Proton acceptor.

The protein belongs to the class I-like SAM-binding methyltransferase superfamily. Cation-independent O-methyltransferase family. COMT subfamily. As to quaternary structure, homodimer. In terms of tissue distribution, expressed in roots, stems, leaves and flowers.

It carries out the reaction (S)-3'-hydroxy-N-methylcoclaurine + S-adenosyl-L-methionine = (S)-reticuline + S-adenosyl-L-homocysteine + H(+). It participates in alkaloid biosynthesis; (S)-reticuline biosynthesis; (S)-reticuline from (S)-norcoclaurine: step 4/4. Functionally, involved in the biosynthesis of benzylisoquinoline alkaloids. Catalyzes the transfer of the methyl group to the 4'-hydroxyl group of 3'-hydroxy-N-methylcoclaurine to form reticuline. Can also use laudanosoline and, with a lower activity, 6-O-methylnorlaudanosoline and norlaudanosoline as substrates. Also involved in the papaverine biosynthesis. This is 3'-hydroxy-N-methyl-(S)-coclaurine 4'-O-methyltransferase 2 from Papaver somniferum (Opium poppy).